Here is a 341-residue protein sequence, read N- to C-terminus: Anthranilate phosphoribosyltransferase (341 aa).

Residues glycine 79, 82–83 (GD), threonine 87, 89–92 (NIST), 107–115 (KHGNRAATS), and serine 119 contribute to the 5-phospho-alpha-D-ribose 1-diphosphate site. Residue glycine 79 participates in anthranilate binding. Residue serine 91 coordinates Mg(2+). Asparagine 110 is a binding site for anthranilate. Arginine 165 is a binding site for anthranilate. 2 residues coordinate Mg(2+): aspartate 224 and glutamate 225.

The protein belongs to the anthranilate phosphoribosyltransferase family. As to quaternary structure, homodimer. Mg(2+) serves as cofactor.

The enzyme catalyses N-(5-phospho-beta-D-ribosyl)anthranilate + diphosphate = 5-phospho-alpha-D-ribose 1-diphosphate + anthranilate. It functions in the pathway amino-acid biosynthesis; L-tryptophan biosynthesis; L-tryptophan from chorismate: step 2/5. In terms of biological role, catalyzes the transfer of the phosphoribosyl group of 5-phosphorylribose-1-pyrophosphate (PRPP) to anthranilate to yield N-(5'-phosphoribosyl)-anthranilate (PRA). This Symbiobacterium thermophilum (strain DSM 24528 / JCM 14929 / IAM 14863 / T) protein is Anthranilate phosphoribosyltransferase.